The primary structure comprises 242 residues: Small ribosomal subunit protein uS2 (242 aa).

This sequence belongs to the universal ribosomal protein uS2 family.

The sequence is that of Small ribosomal subunit protein uS2 from Mannheimia succiniciproducens (strain KCTC 0769BP / MBEL55E).